We begin with the raw amino-acid sequence, 456 residues long: ATP-dependent protease ATPase subunit HslU (456 aa).

ATP is bound by residues Ile-18, Gly-60–Glu-65, Asp-270, Glu-334, and Arg-406.

The protein belongs to the ClpX chaperone family. HslU subfamily. In terms of assembly, a double ring-shaped homohexamer of HslV is capped on each side by a ring-shaped HslU homohexamer. The assembly of the HslU/HslV complex is dependent on binding of ATP.

It is found in the cytoplasm. Its function is as follows. ATPase subunit of a proteasome-like degradation complex; this subunit has chaperone activity. The binding of ATP and its subsequent hydrolysis by HslU are essential for unfolding of protein substrates subsequently hydrolyzed by HslV. HslU recognizes the N-terminal part of its protein substrates and unfolds these before they are guided to HslV for hydrolysis. In Exiguobacterium sibiricum (strain DSM 17290 / CCUG 55495 / CIP 109462 / JCM 13490 / 255-15), this protein is ATP-dependent protease ATPase subunit HslU.